Consider the following 180-residue polypeptide: ATP-dependent protease subunit HslV (180 aa).

Residue Thr5 is part of the active site. Residues Gly161, Cys164, and Thr167 each coordinate Na(+).

Belongs to the peptidase T1B family. HslV subfamily. In terms of assembly, a double ring-shaped homohexamer of HslV is capped on each side by a ring-shaped HslU homohexamer. The assembly of the HslU/HslV complex is dependent on binding of ATP.

It is found in the cytoplasm. The enzyme catalyses ATP-dependent cleavage of peptide bonds with broad specificity.. With respect to regulation, allosterically activated by HslU binding. Functionally, protease subunit of a proteasome-like degradation complex believed to be a general protein degrading machinery. The protein is ATP-dependent protease subunit HslV of Campylobacter fetus subsp. fetus (strain 82-40).